The sequence spans 428 residues: uncharacterized protein (428 aa).

Residues 72–91 are disordered; that stretch reads SQGSPVAPSPNHRSTMYSSS. The residue at position 127 (serine 127) is a Phosphoserine.

This is an uncharacterized protein from Saccharomyces cerevisiae (strain ATCC 204508 / S288c) (Baker's yeast).